We begin with the raw amino-acid sequence, 363 residues long: MIVALPPLMVAEKPPMALVLGLESSCDETAVALVDNDGNIISSHLATQEILHRPYGGVVPEIAARAHVERLEPLVRKVLNESGKNLSEIDAIAATAGPGLIGGVMVGFVTGKALSLACKKPLIAINHLEGHALTPRLADKTLSFPYLLLLISGGHCQILLVKNVGEYRRLATTIDDAGGEAFDKTAKILGLGFPGGPAVEREALNGDPMAVPLPRPLIKSKEPHFSFAGLKTAVLRAYQSGIYKRHDIAASFQQAVIDCLVNRSEKALKKIEGENIQINAFVIAGGMAANQAIRPALTDLAEAHNLPLIAPPPSLCTDNGAMIAWAGVERFRLGMIDNLESPARARWPLDPHAEKARGAGVKA.

The Fe cation site is built by His-127 and His-131. Substrate is bound by residues 150–154, Asp-183, Gly-196, and Asn-290; that span reads LISGG. Asp-318 contacts Fe cation.

The protein belongs to the KAE1 / TsaD family. It depends on Fe(2+) as a cofactor.

Its subcellular location is the cytoplasm. It carries out the reaction L-threonylcarbamoyladenylate + adenosine(37) in tRNA = N(6)-L-threonylcarbamoyladenosine(37) in tRNA + AMP + H(+). Functionally, required for the formation of a threonylcarbamoyl group on adenosine at position 37 (t(6)A37) in tRNAs that read codons beginning with adenine. Is involved in the transfer of the threonylcarbamoyl moiety of threonylcarbamoyl-AMP (TC-AMP) to the N6 group of A37, together with TsaE and TsaB. TsaD likely plays a direct catalytic role in this reaction. This chain is tRNA N6-adenosine threonylcarbamoyltransferase, found in Zymomonas mobilis subsp. mobilis (strain ATCC 31821 / ZM4 / CP4).